The sequence spans 745 residues: Elongation factor G, mitochondrial (745 aa).

In terms of domain architecture, tr-type G spans glutamate 40 to glycine 317. Residues alanine 49–threonine 56, aspartate 116–histidine 120, and asparagine 170–aspartate 173 each bind GTP.

Belongs to the TRAFAC class translation factor GTPase superfamily. Classic translation factor GTPase family. EF-G/EF-2 subfamily.

The protein localises to the mitochondrion. It participates in protein biosynthesis; polypeptide chain elongation. Functionally, mitochondrial GTPase that catalyzes the GTP-dependent ribosomal translocation step during translation elongation. During this step, the ribosome changes from the pre-translocational (PRE) to the post-translocational (POST) state as the newly formed A-site-bound peptidyl-tRNA and P-site-bound deacylated tRNA move to the P and E sites, respectively. Catalyzes the coordinated movement of the two tRNA molecules, the mRNA and conformational changes in the ribosome. Essential during development as it acts as a retrograde signal from mitochondria to the nucleus to slow down cell proliferation if mitochondrial energy output is low. This Drosophila melanogaster (Fruit fly) protein is Elongation factor G, mitochondrial.